Consider the following 284-residue polypeptide: Tryptophan synthase alpha chain (284 aa).

Active-site proton acceptor residues include Glu59 and Asp70.

It belongs to the TrpA family. In terms of assembly, tetramer of two alpha and two beta chains.

The catalysed reaction is (1S,2R)-1-C-(indol-3-yl)glycerol 3-phosphate + L-serine = D-glyceraldehyde 3-phosphate + L-tryptophan + H2O. Its pathway is amino-acid biosynthesis; L-tryptophan biosynthesis; L-tryptophan from chorismate: step 5/5. In terms of biological role, the alpha subunit is responsible for the aldol cleavage of indoleglycerol phosphate to indole and glyceraldehyde 3-phosphate. The protein is Tryptophan synthase alpha chain of Azospirillum brasilense.